Consider the following 530-residue polypeptide: Bifunctional purine biosynthesis protein PurH (530 aa).

Residues 1–148 (MNNARPIHRA…KNHKDVAIVV (148 aa)) form the MGS-like domain.

This sequence belongs to the PurH family.

It carries out the reaction (6R)-10-formyltetrahydrofolate + 5-amino-1-(5-phospho-beta-D-ribosyl)imidazole-4-carboxamide = 5-formamido-1-(5-phospho-D-ribosyl)imidazole-4-carboxamide + (6S)-5,6,7,8-tetrahydrofolate. The catalysed reaction is IMP + H2O = 5-formamido-1-(5-phospho-D-ribosyl)imidazole-4-carboxamide. The protein operates within purine metabolism; IMP biosynthesis via de novo pathway; 5-formamido-1-(5-phospho-D-ribosyl)imidazole-4-carboxamide from 5-amino-1-(5-phospho-D-ribosyl)imidazole-4-carboxamide (10-formyl THF route): step 1/1. It participates in purine metabolism; IMP biosynthesis via de novo pathway; IMP from 5-formamido-1-(5-phospho-D-ribosyl)imidazole-4-carboxamide: step 1/1. The polypeptide is Bifunctional purine biosynthesis protein PurH (Vibrio cholerae serotype O1 (strain M66-2)).